We begin with the raw amino-acid sequence, 207 residues long: Keratin-associated protein 27-1 (207 aa).

Residues 184-207 (QLLESSPGVEPTCCVTGGSQLPSK) are disordered.

The protein belongs to the PMG family. In terms of assembly, interacts with hair keratins.

Functionally, in the hair cortex, hair keratin intermediate filaments are embedded in an interfilamentous matrix, consisting of hair keratin-associated proteins (KRTAP), which are essential for the formation of a rigid and resistant hair shaft through their extensive disulfide bond cross-linking with abundant cysteine residues of hair keratins. The matrix proteins include the high-sulfur and high-glycine-tyrosine keratins. The sequence is that of Keratin-associated protein 27-1 (KRTAP27-1) from Homo sapiens (Human).